The primary structure comprises 390 residues: Queuine tRNA-ribosyltransferase (390 aa).

The active-site Proton acceptor is D92. Residues 92–96 (DSGGF), D146, Q195, and G222 each bind substrate. The tract at residues 253 to 259 (GVGTPED) is RNA binding. D272 serves as the catalytic Nucleophile. Residues 277-281 (TRNAR) are RNA binding; important for wobble base 34 recognition. Zn(2+)-binding residues include C310, C312, C315, and H354.

It belongs to the queuine tRNA-ribosyltransferase family. In terms of assembly, homodimer. Within each dimer, one monomer is responsible for RNA recognition and catalysis, while the other monomer binds to the replacement base PreQ1. Zn(2+) serves as cofactor.

It catalyses the reaction 7-aminomethyl-7-carbaguanine + guanosine(34) in tRNA = 7-aminomethyl-7-carbaguanosine(34) in tRNA + guanine. It functions in the pathway tRNA modification; tRNA-queuosine biosynthesis. Its function is as follows. Catalyzes the base-exchange of a guanine (G) residue with the queuine precursor 7-aminomethyl-7-deazaguanine (PreQ1) at position 34 (anticodon wobble position) in tRNAs with GU(N) anticodons (tRNA-Asp, -Asn, -His and -Tyr). Catalysis occurs through a double-displacement mechanism. The nucleophile active site attacks the C1' of nucleotide 34 to detach the guanine base from the RNA, forming a covalent enzyme-RNA intermediate. The proton acceptor active site deprotonates the incoming PreQ1, allowing a nucleophilic attack on the C1' of the ribose to form the product. After dissociation, two additional enzymatic reactions on the tRNA convert PreQ1 to queuine (Q), resulting in the hypermodified nucleoside queuosine (7-(((4,5-cis-dihydroxy-2-cyclopenten-1-yl)amino)methyl)-7-deazaguanosine). The polypeptide is Queuine tRNA-ribosyltransferase (Delftia acidovorans (strain DSM 14801 / SPH-1)).